The primary structure comprises 394 residues: MSQNRPAAFNTLRMGEVIREKVQDGITGETRDLQYTQCKIVGNGSFGVVFQTKLSPSNEDAAIKRVLQDKRFKNRELQIMRIVRHPNIVQLKAFYYSNGERRDEVYLNLVQEFVPETVYRASRFFNKMKTTMPILEVKLYIYQLFRALAYIHSQGICHRDIKPQNLLLDPTTGILKLCDFGSAKILVENEPNVSYICSRYYRAPELIFGATNYTTKIDVWSTGCVMAELMLGQPLFPGESGIDQLVEIIKVLGTPTREQIRTMNPNYMEHKFPQIKPHPFNRVLRKADNNAIDLIARLLEYTPTERLGAIDAMVHPFFDDLRNPSTKLPDSRHQTGQVRDLPPLFDFNRHELSIAPQLNHQLVPPHVRPTLAAQGLDIDHFTPMRKEDMLARLD.

The Protein kinase domain occupies 35–318 (YTQCKIVGNG…AIDAMVHPFF (284 aa)). ATP-binding positions include 41-49 (VGNGSFGVV) and Lys64.

The protein belongs to the protein kinase superfamily. CMGC Ser/Thr protein kinase family. GSK-3 subfamily.

The protein resides in the cytoplasm. The enzyme catalyses L-seryl-[protein] + ATP = O-phospho-L-seryl-[protein] + ADP + H(+). Functionally, protein kinase that acts downstream of the MPS1 MAPK cascade as a highly conservative signal modulator that dictates growth, conidiation and pathogenicity. Phosphorylates HAT1 at 'Ser-8' to block its translocation from the nucleus to the cytoplasm where HAT1 positively regulates appressorium development and pathogenicity. This chain is Glycogen synthase kinase 1, found in Pyricularia oryzae (Rice blast fungus).